Here is a 260-residue protein sequence, read N- to C-terminus: Thiazole synthase (260 aa).

Lysine 102 serves as the catalytic Schiff-base intermediate with DXP. Residues glycine 163, 189–190, and 211–212 each bind 1-deoxy-D-xylulose 5-phosphate; these read AG and NT.

It belongs to the ThiG family. Homotetramer. Forms heterodimers with either ThiH or ThiS.

It localises to the cytoplasm. The enzyme catalyses [ThiS sulfur-carrier protein]-C-terminal-Gly-aminoethanethioate + 2-iminoacetate + 1-deoxy-D-xylulose 5-phosphate = [ThiS sulfur-carrier protein]-C-terminal Gly-Gly + 2-[(2R,5Z)-2-carboxy-4-methylthiazol-5(2H)-ylidene]ethyl phosphate + 2 H2O + H(+). Its pathway is cofactor biosynthesis; thiamine diphosphate biosynthesis. Functionally, catalyzes the rearrangement of 1-deoxy-D-xylulose 5-phosphate (DXP) to produce the thiazole phosphate moiety of thiamine. Sulfur is provided by the thiocarboxylate moiety of the carrier protein ThiS. In vitro, sulfur can be provided by H(2)S. The polypeptide is Thiazole synthase (Geobacter metallireducens (strain ATCC 53774 / DSM 7210 / GS-15)).